Consider the following 71-residue polypeptide: Protein MTH_1184 (71 aa).

This is Protein MTH_1184 from Methanothermobacter thermautotrophicus (strain ATCC 29096 / DSM 1053 / JCM 10044 / NBRC 100330 / Delta H) (Methanobacterium thermoautotrophicum).